The chain runs to 178 residues: Inorganic pyrophosphatase (178 aa).

Lys-30, Arg-44, and Tyr-56 together coordinate substrate. 3 residues coordinate Mg(2+): Asp-66, Asp-71, and Asp-103. Position 142 (Tyr-142) interacts with substrate.

The protein belongs to the PPase family. In terms of assembly, homohexamer. Mg(2+) serves as cofactor.

The protein resides in the cytoplasm. It carries out the reaction diphosphate + H2O = 2 phosphate + H(+). Functionally, catalyzes the hydrolysis of inorganic pyrophosphate (PPi) forming two phosphate ions. The chain is Inorganic pyrophosphatase from Xanthomonas axonopodis pv. citri (strain 306).